A 302-amino-acid polypeptide reads, in one-letter code: Succinate--CoA ligase [ADP-forming] subunit alpha (302 aa).

CoA contacts are provided by residues 17-20, Lys-43, and 96-98; these read TGST and ITE. A substrate-binding site is contributed by Tyr-159. Residue His-247 is the Tele-phosphohistidine intermediate of the active site.

This sequence belongs to the succinate/malate CoA ligase alpha subunit family. In terms of assembly, heterotetramer of two alpha and two beta subunits.

The enzyme catalyses succinate + ATP + CoA = succinyl-CoA + ADP + phosphate. It catalyses the reaction GTP + succinate + CoA = succinyl-CoA + GDP + phosphate. Its pathway is carbohydrate metabolism; tricarboxylic acid cycle; succinate from succinyl-CoA (ligase route): step 1/1. In terms of biological role, succinyl-CoA synthetase functions in the citric acid cycle (TCA), coupling the hydrolysis of succinyl-CoA to the synthesis of either ATP or GTP and thus represents the only step of substrate-level phosphorylation in the TCA. The alpha subunit of the enzyme binds the substrates coenzyme A and phosphate, while succinate binding and nucleotide specificity is provided by the beta subunit. The chain is Succinate--CoA ligase [ADP-forming] subunit alpha from Staphylococcus aureus (strain COL).